We begin with the raw amino-acid sequence, 142 residues long: Transcriptional regulator MraZ (142 aa).

2 consecutive SpoVT-AbrB domains span residues 5–47 and 76–119; these read RFTH…PMDS and ATVV…SPEN.

Belongs to the MraZ family. Forms oligomers.

The protein localises to the cytoplasm. It is found in the nucleoid. This chain is Transcriptional regulator MraZ, found in Thermomicrobium roseum (strain ATCC 27502 / DSM 5159 / P-2).